A 200-amino-acid polypeptide reads, in one-letter code: Phospholipase A2 inhibitor gamma subunit A (200 aa).

The signal sequence occupies residues methionine 1–serine 19. 8 disulfides stabilise this stretch: cysteine 22/cysteine 46, cysteine 25/cysteine 32, cysteine 39/cysteine 67, cysteine 73/cysteine 94, cysteine 95/cysteine 100, cysteine 118/cysteine 143, cysteine 136/cysteine 165, and cysteine 169/cysteine 191. Asparagine 176 is a glycosylation site (N-linked (GlcNAc...) asparagine).

The protein belongs to the CNF-like-inhibitor family. In terms of assembly, occurs as a mixture of oligomers. Tetrameric arrangement appears to be the predominant quaternary structure. In terms of tissue distribution, expressed by the liver.

It is found in the secreted. Inhibits the enzymatic activity of phospholipase A2 (PA2). This Gloydius brevicaudus siniticus (Chinese mamushi) protein is Phospholipase A2 inhibitor gamma subunit A.